We begin with the raw amino-acid sequence, 275 residues long: Large ribosomal subunit protein uL2 (275 aa).

Residues 38–53 (NSKAGRNNNGRITTRH) are compositionally biased toward polar residues. 2 disordered regions span residues 38-59 (NSKAGRNNNGRITTRHQGGGHK) and 224-257 (AMNPIDHPHGGGEGRTAAGRDPVSPWGTPTKGFR).

It belongs to the universal ribosomal protein uL2 family. As to quaternary structure, part of the 50S ribosomal subunit. Forms a bridge to the 30S subunit in the 70S ribosome.

Its function is as follows. One of the primary rRNA binding proteins. Required for association of the 30S and 50S subunits to form the 70S ribosome, for tRNA binding and peptide bond formation. It has been suggested to have peptidyltransferase activity; this is somewhat controversial. Makes several contacts with the 16S rRNA in the 70S ribosome. This chain is Large ribosomal subunit protein uL2, found in Burkholderia thailandensis (strain ATCC 700388 / DSM 13276 / CCUG 48851 / CIP 106301 / E264).